Here is a 319-residue protein sequence, read N- to C-terminus: 4-hydroxy-3-methylbut-2-enyl diphosphate reductase (319 aa).

[4Fe-4S] cluster is bound at residue Cys17. 2 residues coordinate (2E)-4-hydroxy-3-methylbut-2-enyl diphosphate: His46 and His79. Dimethylallyl diphosphate-binding residues include His46 and His79. Isopentenyl diphosphate contacts are provided by His46 and His79. Cys101 is a [4Fe-4S] cluster binding site. His129 contributes to the (2E)-4-hydroxy-3-methylbut-2-enyl diphosphate binding site. His129 is a dimethylallyl diphosphate binding site. His129 provides a ligand contact to isopentenyl diphosphate. Glu131 serves as the catalytic Proton donor. Thr170 is a binding site for (2E)-4-hydroxy-3-methylbut-2-enyl diphosphate. Cys200 contacts [4Fe-4S] cluster. Residues Ser228, Ser229, Asn230, and Ser273 each coordinate (2E)-4-hydroxy-3-methylbut-2-enyl diphosphate. 4 residues coordinate dimethylallyl diphosphate: Ser228, Ser229, Asn230, and Ser273. Positions 228, 229, 230, and 273 each coordinate isopentenyl diphosphate.

It belongs to the IspH family. Requires [4Fe-4S] cluster as cofactor.

The enzyme catalyses isopentenyl diphosphate + 2 oxidized [2Fe-2S]-[ferredoxin] + H2O = (2E)-4-hydroxy-3-methylbut-2-enyl diphosphate + 2 reduced [2Fe-2S]-[ferredoxin] + 2 H(+). The catalysed reaction is dimethylallyl diphosphate + 2 oxidized [2Fe-2S]-[ferredoxin] + H2O = (2E)-4-hydroxy-3-methylbut-2-enyl diphosphate + 2 reduced [2Fe-2S]-[ferredoxin] + 2 H(+). The protein operates within isoprenoid biosynthesis; dimethylallyl diphosphate biosynthesis; dimethylallyl diphosphate from (2E)-4-hydroxy-3-methylbutenyl diphosphate: step 1/1. Its pathway is isoprenoid biosynthesis; isopentenyl diphosphate biosynthesis via DXP pathway; isopentenyl diphosphate from 1-deoxy-D-xylulose 5-phosphate: step 6/6. Catalyzes the conversion of 1-hydroxy-2-methyl-2-(E)-butenyl 4-diphosphate (HMBPP) into a mixture of isopentenyl diphosphate (IPP) and dimethylallyl diphosphate (DMAPP). Acts in the terminal step of the DOXP/MEP pathway for isoprenoid precursor biosynthesis. This chain is 4-hydroxy-3-methylbut-2-enyl diphosphate reductase, found in Cereibacter sphaeroides (strain ATCC 17023 / DSM 158 / JCM 6121 / CCUG 31486 / LMG 2827 / NBRC 12203 / NCIMB 8253 / ATH 2.4.1.) (Rhodobacter sphaeroides).